Consider the following 317-residue polypeptide: tRNA uridine(34) hydroxylase (317 aa).

Residues 129 to 223 (TDPEVLLIDT…YLEEVPEQES (95 aa)) enclose the Rhodanese domain. Cysteine 183 functions as the Cysteine persulfide intermediate in the catalytic mechanism. The disordered stretch occupies residues 298-317 (AKARNQPHPIGRNYRLPSEA).

The protein belongs to the TrhO family.

It catalyses the reaction uridine(34) in tRNA + AH2 + O2 = 5-hydroxyuridine(34) in tRNA + A + H2O. In terms of biological role, catalyzes oxygen-dependent 5-hydroxyuridine (ho5U) modification at position 34 in tRNAs. The protein is tRNA uridine(34) hydroxylase of Pseudomonas syringae pv. tomato (strain ATCC BAA-871 / DC3000).